The sequence spans 65 residues: MNSAHPCCDPVTCKPKRGEHCISGPCCRNCKFLSPGTICKKARGDDMNDYCTGISSDCPRNRIKK.

The region spanning 1-65 is the Disintegrin domain; that stretch reads MNSAHPCCDP…SDCPRNRIKK (65 aa). Disulfide bonds link Cys-7–Cys-30, Cys-21–Cys-27, Cys-26–Cys-51, and Cys-39–Cys-58. A Cell attachment site motif is present at residues 43-45; it reads RGD.

Belongs to the disintegrin family. Dimeric disintegrin subfamily. In terms of assembly, heterodimer with CC8B; disulfide-linked. Expressed by the venom gland.

It localises to the secreted. Its function is as follows. Inhibits integrins alpha-IIb/beta-3 (ITGA2B/ITGB3), alpha-V/beta-3 (ITGAV/ITGB3), and alpha-5/beta-1 (ITGA5/ITGB1). This is Disintegrin CC8A from Cerastes cerastes (Horned desert viper).